The primary structure comprises 252 residues: Carboxy-S-adenosyl-L-methionine synthase (252 aa).

S-adenosyl-L-methionine contacts are provided by residues Tyr45, 70–72, 95–96, 123–124, Asn138, and Arg205; these read GCS, DN, and DI.

The protein belongs to the class I-like SAM-binding methyltransferase superfamily. Cx-SAM synthase family. In terms of assembly, homodimer.

It catalyses the reaction prephenate + S-adenosyl-L-methionine = carboxy-S-adenosyl-L-methionine + 3-phenylpyruvate + H2O. Catalyzes the conversion of S-adenosyl-L-methionine (SAM) to carboxy-S-adenosyl-L-methionine (Cx-SAM). In Photorhabdus laumondii subsp. laumondii (strain DSM 15139 / CIP 105565 / TT01) (Photorhabdus luminescens subsp. laumondii), this protein is Carboxy-S-adenosyl-L-methionine synthase.